Consider the following 321-residue polypeptide: ATP-dependent 6-phosphofructokinase (321 aa).

Residue glycine 12 coordinates ATP. ADP is bound by residues arginine 22 to arginine 26 and arginine 55 to aspartate 60. Residues arginine 73–phenylalanine 74 and glycine 103–serine 106 each bind ATP. A Mg(2+)-binding site is contributed by aspartate 104. Threonine 127–aspartate 129 lines the substrate pocket. Aspartate 129 (proton acceptor) is an active-site residue. Residue arginine 156 coordinates ADP. Residues arginine 164 and methionine 171–arginine 173 each bind substrate. Residues glycine 187–glutamate 189, lysine 213, and lysine 215–histidine 217 contribute to the ADP site. Substrate is bound by residues glutamate 224, arginine 245, and histidine 251–arginine 254.

Belongs to the phosphofructokinase type A (PFKA) family. ATP-dependent PFK group I subfamily. Prokaryotic clade 'B1' sub-subfamily. Homotetramer. Mg(2+) serves as cofactor.

The protein localises to the cytoplasm. The catalysed reaction is beta-D-fructose 6-phosphate + ATP = beta-D-fructose 1,6-bisphosphate + ADP + H(+). It participates in carbohydrate degradation; glycolysis; D-glyceraldehyde 3-phosphate and glycerone phosphate from D-glucose: step 3/4. Its activity is regulated as follows. Allosterically activated by ADP and other diphosphonucleosides, and allosterically inhibited by phosphoenolpyruvate. Its function is as follows. Catalyzes the phosphorylation of D-fructose 6-phosphate to fructose 1,6-bisphosphate by ATP, the first committing step of glycolysis. The polypeptide is ATP-dependent 6-phosphofructokinase (Histophilus somni (strain 129Pt) (Haemophilus somnus)).